Reading from the N-terminus, the 761-residue chain is Prolyl endopeptidase FAP (761 aa).

The Cytoplasmic portion of the chain corresponds to 1–4; it reads MKTW. Residues 5 to 25 form a helical; Signal-anchor for type II membrane protein membrane-spanning segment; sequence LKTVFGVTTLAALALVVICIV. The Extracellular portion of the chain corresponds to 26-761; that stretch reads LRPSRVYKPE…FLKQCFSLSD (736 aa). Residues N49, N92, and N99 are each glycosylated (N-linked (GlcNAc...) asparagine). Substrate is bound by residues E203 and E204. Residues N227 and N314 are each glycosylated (N-linked (GlcNAc...) asparagine). 3 disulfides stabilise this stretch: C321-C332, C438-C441, and C448-C466. S624 serves as the catalytic Charge relay system. C643 and C756 form a disulfide bridge. An N-linked (GlcNAc...) asparagine glycan is attached at N679. Catalysis depends on charge relay system residues D702 and H734.

This sequence belongs to the peptidase S9B family. Homodimer; homodimerization is required for activity of both plasma membrane and soluble forms. The monomer is inactive. Heterodimer with DPP4. Interacts with PLAUR; the interaction occurs at the cell surface of invadopodia membranes. Interacts with ITGB1. Interacts with ITGA3. Associates with integrin alpha-3/beta-1; the association occurs in a collagen-dependent manner at the cell surface of invadopodia membranes. In terms of processing, N-glycosylated. Post-translationally, the N-terminus may be blocked. Expressed strongly in uterus, pancreas, submaxillary gland and skin, less in lymph node, ovary, skeletal muscle, adrenal and bone marrow. Expressed in reactive stromal fibroblast in epithelial cancers. Expressed in melanocytes but not melanomas (at protein level). Detected in fibroblasts, in placenta, uterus, embryos from day 7-19 and in newborn mice (P1).

The protein resides in the cell surface. Its subcellular location is the cell membrane. It localises to the cell projection. The protein localises to the lamellipodium membrane. It is found in the invadopodium membrane. The protein resides in the ruffle membrane. Its subcellular location is the membrane. It localises to the secreted. The enzyme catalyses Hydrolysis of Pro-|-Xaa &gt;&gt; Ala-|-Xaa in oligopeptides.. It catalyses the reaction Release of an N-terminal dipeptide, Xaa-Yaa-|-Zaa-, from a polypeptide, preferentially when Yaa is Pro, provided Zaa is neither Pro nor hydroxyproline.. Gelatinase activity is inhibited by serine-protease inhibitors, such as phenylmethylsulfonyl fluoride (PMSF), 4-(2-aminoethyl)-benzenesulfonyl fluoride hydrochloride (AEBSF), 4-amidino phenylsulfonyl fluoride (APSF) and diisopropyl fluorophosphate (DFP), N-ethylmaleimide (NEM) and phenylmethylsulfonyl fluoride (PMSF). Dipeptidyl peptidase activity is inhibited by 2,2'-azino-bis(3-ethylbenzthiazoline-6-sulfonic acid), diisopropylfluorophosphate (DFP). Prolyl endopeptidase activity is inhibited by the boronic acid peptide Ac-Gly-BoroPro, Ac-Gly-Pro-chloromethyl ketone and Thr-Ser-Gly-chloromethyl ketone. Cell surface glycoprotein serine protease that participates in extracellular matrix degradation and involved in many cellular processes including tissue remodeling, fibrosis, wound healing, inflammation and tumor growth. Both plasma membrane and soluble forms exhibit post-proline cleaving endopeptidase activity, with a marked preference for Ala/Ser-Gly-Pro-Ser/Asn/Ala consensus sequences, on substrate such as alpha-2-antiplasmin SERPINF2 and SPRY2. Degrade also gelatin, heat-denatured type I collagen, but not native collagen type I and IV, vibronectin, tenascin, laminin, fibronectin, fibrin or casein. Also has dipeptidyl peptidase activity, exhibiting the ability to hydrolyze the prolyl bond two residues from the N-terminus of synthetic dipeptide substrates provided that the penultimate residue is proline, with a preference for Ala-Pro, Ile-Pro, Gly-Pro, Arg-Pro and Pro-Pro. Natural neuropeptide hormones for dipeptidyl peptidase are the neuropeptide Y (NPY), peptide YY (PYY), substance P (TAC1) and brain natriuretic peptide 32 (NPPB). The plasma membrane form, in association with either DPP4, PLAUR or integrins, is involved in the pericellular proteolysis of the extracellular matrix (ECM), and hence promotes cell adhesion, migration and invasion through the ECM. Plays a role in tissue remodeling during development and wound healing. Participates in the cell invasiveness towards the ECM in malignant melanoma cancers. Enhances tumor growth progression by increasing angiogenesis, collagen fiber degradation and apoptosis and by reducing antitumor response of the immune system. Promotes glioma cell invasion through the brain parenchyma by degrading the proteoglycan brevican. Acts as a tumor suppressor in melanocytic cells through regulation of cell proliferation and survival in a serine protease activity-independent manner. The protein is Prolyl endopeptidase FAP of Mus musculus (Mouse).